The primary structure comprises 238 residues: Riboflavin synthase (238 aa).

2 Lumazine-binding repeats span residues 1-103 and 104-205; these read MFTG…FGGH and YVQG…EKQI. 2,4-dihydroxypteridine is bound by residues 4–6, 54–56, and 68–73; these read GIV, CLT, and GISPET. A Phosphoserine modification is found at Ser95. 2,4-dihydroxypteridine-binding positions include 107-109, Lys143, 152-154, and 170-175; these read GHV, SLT, and SMIKHT.

Homotrimer.

The catalysed reaction is 2 6,7-dimethyl-8-(1-D-ribityl)lumazine + H(+) = 5-amino-6-(D-ribitylamino)uracil + riboflavin. The protein operates within cofactor biosynthesis; riboflavin biosynthesis; riboflavin from 2-hydroxy-3-oxobutyl phosphate and 5-amino-6-(D-ribitylamino)uracil: step 2/2. Functionally, catalyzes the dismutation of two molecules of 6,7-dimethyl-8-ribityllumazine, resulting in the formation of riboflavin and 5-amino-6-(D-ribitylamino)uracil. The sequence is that of Riboflavin synthase from Saccharomyces cerevisiae (strain ATCC 204508 / S288c) (Baker's yeast).